A 434-amino-acid chain; its full sequence is Glutamate-1-semialdehyde 2,1-aminomutase (434 aa).

Lysine 270 carries the post-translational modification N6-(pyridoxal phosphate)lysine.

The protein belongs to the class-III pyridoxal-phosphate-dependent aminotransferase family. HemL subfamily. As to quaternary structure, homodimer. It depends on pyridoxal 5'-phosphate as a cofactor.

The protein localises to the cytoplasm. It carries out the reaction (S)-4-amino-5-oxopentanoate = 5-aminolevulinate. It participates in porphyrin-containing compound metabolism; protoporphyrin-IX biosynthesis; 5-aminolevulinate from L-glutamyl-tRNA(Glu): step 2/2. This chain is Glutamate-1-semialdehyde 2,1-aminomutase, found in Pelotomaculum thermopropionicum (strain DSM 13744 / JCM 10971 / SI).